A 198-amino-acid chain; its full sequence is Nucleoside triphosphate pyrophosphatase (198 aa).

Aspartate 72 functions as the Proton acceptor in the catalytic mechanism.

It belongs to the Maf family. A divalent metal cation serves as cofactor.

Its subcellular location is the cytoplasm. It carries out the reaction a ribonucleoside 5'-triphosphate + H2O = a ribonucleoside 5'-phosphate + diphosphate + H(+). It catalyses the reaction a 2'-deoxyribonucleoside 5'-triphosphate + H2O = a 2'-deoxyribonucleoside 5'-phosphate + diphosphate + H(+). Nucleoside triphosphate pyrophosphatase. May have a dual role in cell division arrest and in preventing the incorporation of modified nucleotides into cellular nucleic acids. This Corynebacterium aurimucosum (strain ATCC 700975 / DSM 44827 / CIP 107346 / CN-1) (Corynebacterium nigricans) protein is Nucleoside triphosphate pyrophosphatase.